Here is a 459-residue protein sequence, read N- to C-terminus: Exodeoxyribonuclease 7 large subunit (459 aa).

Belongs to the XseA family. As to quaternary structure, heterooligomer composed of large and small subunits.

It is found in the cytoplasm. The catalysed reaction is Exonucleolytic cleavage in either 5'- to 3'- or 3'- to 5'-direction to yield nucleoside 5'-phosphates.. Bidirectionally degrades single-stranded DNA into large acid-insoluble oligonucleotides, which are then degraded further into small acid-soluble oligonucleotides. In Pseudomonas savastanoi pv. phaseolicola (strain 1448A / Race 6) (Pseudomonas syringae pv. phaseolicola (strain 1448A / Race 6)), this protein is Exodeoxyribonuclease 7 large subunit.